The chain runs to 205 residues: NADH-quinone oxidoreductase subunit J (205 aa).

Transmembrane regions (helical) follow at residues 1 to 21 (MPIF…CVVL), 26 to 46 (VYSV…MILL), 54 to 74 (MLIV…IMML), 89 to 109 (LALS…IILL), and 142 to 162 (FMLP…ACIT).

The protein belongs to the complex I subunit 6 family.

The protein localises to the cell membrane. The enzyme catalyses a quinone + NADH + 5 H(+)(in) = a quinol + NAD(+) + 4 H(+)(out). In terms of biological role, NDH-1 shuttles electrons from NADH, via FMN and iron-sulfur (Fe-S) centers, to quinones in the respiratory chain. Couples the redox reaction to proton translocation (for every two electrons transferred, four hydrogen ions are translocated across the cytoplasmic membrane), and thus conserves the redox energy in a proton gradient. The sequence is that of NADH-quinone oxidoreductase subunit J (nuoJ) from Rickettsia conorii (strain ATCC VR-613 / Malish 7).